Consider the following 484-residue polypeptide: MRWLLSCLFLVAFASCSKVLELTKDNFHSELKSIPVALVKFYAPWCGHCKKLAPEFTSAAQIISGKTNDVKLVKVDCTTQESICSEFGVSGYPTLKIFRNGDLDGEYNGPRNANGIANYMISRAGPVSKEVSTVSDVENVLSDDKPTVFAFVKSSSDPLIKTFMALAKSMVDDAVFCHSHNNLFVTPSDNELRVYLPKRLRTKFEDDFAVYKGELESNNIKDWIRKHGQGLVGYRSPSNTFYFENSDLVVLYNNQSIDSYPSGVKYLRNRVLKTLKDNPQKFKNLVFAYSFADDFSYEISDYGIEADKLPAVVIQSKDKKYKLEKFSLDAFSDFLNKFEDGLLTPHVKSEPLPTDDSSAVKKLVALNFDEIVNNEEKDVMVVFHAGWCGHCKNLMPKYEEAASKVKNEPNLVLAAMDATANDVPSPYQVRGFPTIYFVPKGKKSSPVSYEGGRDTNDIIKYLAREATEELIGYDRSGNPKKSEL.

The N-terminal stretch at 1–14 (MRWLLSCLFLVAFA) is a signal peptide. Thioredoxin domains are found at residues 15 to 125 (SCSK…SRAG) and 338 to 467 (FEDG…REAT). Active-site nucleophile residues include Cys46, Cys49, Cys388, and Cys391. Intrachain disulfides connect Cys46–Cys49 and Cys388–Cys391. The short motif at 481 to 484 (KSEL) is the Prevents secretion from ER element.

Belongs to the protein disulfide isomerase family.

It localises to the endoplasmic reticulum lumen. The catalysed reaction is Catalyzes the rearrangement of -S-S- bonds in proteins.. This Schistosoma mansoni (Blood fluke) protein is Probable protein disulfide-isomerase ER-60.